A 324-amino-acid chain; its full sequence is Annexin A10 (324 aa).

Annexin repeat units lie at residues 17-88 (FNPM…GLMY), 89-160 (PPPS…NLVQ), 171-243 (AMAA…AIVR), and 247-318 (DKPS…AICA).

The protein belongs to the annexin family.

This Mus musculus (Mouse) protein is Annexin A10 (Anxa10).